Here is a 417-residue protein sequence, read N- to C-terminus: Voltage-gated ClC-type chloride channel ClcB (417 aa).

Transmembrane regions (helical) follow at residues 5–25 (LLIATLIGILAALAVAAFRHA), 54–74 (LITPALGGLAAGLLLWGWQKM), 146–166 (LWIASGAAAGMAGAYHAPLAG), 168–188 (LFIAEILFGTLMLASLGPVVV), 222–242 (VMIVSTGLVAGLCGPLLMWLM), 258–278 (WQLALGGLIVGLLSLLTPTVW), 288–308 (FLLSPPLFSLIGGIFACKILA), 316–336 (GAPGGVFTPTLFVGLSIGMFL), 349–371 (EIAILLGLAGMATLLAATTHAPI), and 380–400 (MTGEYQLLPGLLIACVVASVL).

Belongs to the chloride channel (TC 2.A.49) family. ClcB subfamily.

It localises to the cell inner membrane. Probably acts as an electrical shunt for an outwardly-directed proton pump that is linked to amino acid decarboxylation, as part of the extreme acid resistance (XAR) response. This chain is Voltage-gated ClC-type chloride channel ClcB, found in Salmonella dublin (strain CT_02021853).